Reading from the N-terminus, the 334-residue chain is Glycerol-1-phosphate dehydrogenase [NAD(P)+] (334 aa).

NAD(+)-binding positions include 77–81 (GRPID) and 99–102 (TTAS). Residue Asp-104 coordinates substrate. Residue Ser-108 coordinates NAD(+). Asp-147 is a binding site for substrate. Zn(2+) is bound by residues Asp-147 and His-225. His-229 is a binding site for substrate. Zn(2+) is bound at residue His-246.

Belongs to the glycerol-1-phosphate dehydrogenase family. Zn(2+) is required as a cofactor.

It localises to the cytoplasm. The catalysed reaction is sn-glycerol 1-phosphate + NAD(+) = dihydroxyacetone phosphate + NADH + H(+). It catalyses the reaction sn-glycerol 1-phosphate + NADP(+) = dihydroxyacetone phosphate + NADPH + H(+). It functions in the pathway membrane lipid metabolism; glycerophospholipid metabolism. Functionally, catalyzes the NAD(P)H-dependent reduction of dihydroxyacetonephosphate (DHAP or glycerone phosphate) to glycerol 1-phosphate (G1P). The G1P thus generated is used as the glycerophosphate backbone of phospholipids in the cellular membranes of Archaea. This Methanococcus maripaludis (strain DSM 14266 / JCM 13030 / NBRC 101832 / S2 / LL) protein is Glycerol-1-phosphate dehydrogenase [NAD(P)+].